The following is a 399-amino-acid chain: MAATAAAVVAEEDTELRYLLVQTLENSGVLNRIKAELRAAVFLALEEQEKVENKTPLVNESLKKFLNTKDGRLVASLVAEFLQFFNLDFTLAVFQPETSTFQGLEGRENLARDLGIIEAEGTVGGPLLLEVIRRCQQKEKALTSGEGALDLSDVHSPPKSPEGKTGAHTPPSKIPRYKGQGNKKTSGQQPGAKKASNDASHSDTSISSSEPKSRSGLHLLAHETKIGSLLSNNSLDVNAKAGPGPEEDDLEGDSFFDDPIPKPEAAYGWRSEPSKQAGSLASLSDAPPLKSGLSSLAGAPSLKESESKRGNTVLKDLKLVNDKIGSLGLGTGEEDDYVDDFNSTSHRSEKSELSIGEEIEEDLSVEMDDVNTSDKLDDLTQDLTVSQLSDVADYLEDVA.

Residues 70–102 enclose the LisH domain; the sequence is DGRLVASLVAEFLQFFNLDFTLAVFQPETSTFQ. At threonine 143 the chain carries Phosphothreonine. The disordered stretch occupies residues 143-311; it reads TSGEGALDLS…LKESESKRGN (169 aa). Phosphoserine is present on residues serine 152, serine 156, serine 160, and serine 202. The segment covering 197-209 has biased composition (low complexity); the sequence is NDASHSDTSISSS. A compositionally biased stretch (acidic residues) spans 245–256; it reads PEEDDLEGDSFF. Residues 286–302 are compositionally biased toward low complexity; that stretch reads APPLKSGLSSLAGAPSL. 2 positions are modified to phosphoserine: serine 301 and serine 326. The tract at residues 328-357 is disordered; that stretch reads GLGTGEEDDYVDDFNSTSHRSEKSELSIGE. Residue tyrosine 337 is modified to Phosphotyrosine.

The protein belongs to the CEP43 family. Homodimer. Part of a ternary complex that contains CEP350, CEP43 and MAPRE1. Interacts directly with CEP350 and MAPRE1. Interacts with CEP19. Interacts (via N-terminus) with CEP350 (via C-terminus).

The protein resides in the cytoplasm. Its subcellular location is the cytoskeleton. It is found in the microtubule organizing center. It localises to the centrosome. The protein localises to the centriole. The protein resides in the cilium basal body. In terms of biological role, required for anchoring microtubules to the centrosomes. Required for ciliation. The sequence is that of Centrosomal protein 43 (CEP43) from Bos taurus (Bovine).